The primary structure comprises 476 residues: MPSQILQISHHLPPKSSPSTEMMFKSLIYDDPSTTLLSRFGDDHHTISSTVKPLLSRSSSYNGTAMKTSSSSSAGGFTGWYQNRRRRSNSDNCLSAFSDDTNGTADGGNNSGDRQTTIGQEVGHAAAETFLLTRLCLKLLSYLGVGYRWITRFMALGCYAFLLMPGFIQVGYYYFFSPYVRRSIVYGDQPRNRLDLYLPKNSTGPKPVVAFVTGGAWIIGYKAWGSLLGQQLSERDIIVACIDYRNFPQGSISDMVKDASSGISFVCNHIAEYGGDPDRIYLMGQSAGAHIAACTIVEQVIKESGEGDSVSWSSSQINAYFGLSGGYNLLNLVDHFHSRGLYRSIFLSIMEGEESLRQFSPELVVQNPNLKHIIARLPPFILFHGTDDYSIPSDASKSFAETLQRLGAKAKVILYEGKTHTDLFLQDPMRGGIDEMFEDIVTVVLGDDQEAIGKSVDRRRLVPEFMLKLAHWVSPF.

The span at N92–T104 shows a compositional bias: polar residues. The tract at residues N92–T116 is disordered. A run of 2 helical transmembrane segments spans residues F153 to Y173 and V208 to L228. Residues G214 to A216 and Q285 to A287 each bind substrate. Catalysis depends on residues S286, D388, and H420.

It belongs to the AB hydrolase superfamily. Isoprenylcysteine methylesterase family. As to expression, expressed in roots, rosette and cauline leaves, stems, flowers and siliques.

Its subcellular location is the endoplasmic reticulum membrane. It localises to the golgi apparatus membrane. It catalyses the reaction [protein]-C-terminal S-[(2E,6E)-farnesyl]-L-cysteine methyl ester + H2O = [protein]-C-terminal S-[(2E,6E)-farnesyl]-L-cysteine + methanol + H(+). Its function is as follows. Catalyzes the demethylation of isoprenylcysteine methylesters. May be involved in the regulation of ABA signaling. This is Probable isoprenylcysteine alpha-carbonyl methylesterase ICMEL1 from Arabidopsis thaliana (Mouse-ear cress).